The chain runs to 453 residues: MAGAGGGGCPAGGNDFQWCFSQVKGAIDEDVAEADIISTVEFNYSGDLLATGDKGGRVVIFQREQENKSRPHSRGEYNVYSTFQSHEPEFDYLKSLEIEEKINKIRWLPQQNAAHFLLSTNDKTIKLWKISERDKRAEGYNLKDEDGRLRDPFRITALRVPILKPMDLMVEASPRRIFANAHTYHINSISVNSDHETYLSADDLRINLWHLEITDRSFNIVDIKPANMEELTEVITAAEFHPHQCNVFVYSSSKGTIRLCDMRSSALCDRHSKFFEEPEDPSSRSFFSEIISSISDVKFSHSGRYMMTRDYLSVKVWDLNMESRPVETHQVHEYLRSKLCSLYENDCIFDKFECCWNGSDSAIMTGSYNNFFRMFDRDTRRDVTLEASRESSKPRASLKPRKVCTGGKRRKDEISVDSLDFNKKILHTAWHPVDNVIAVAATNNLYIFQDKIN.

WD repeat units lie at residues 32 to 71 (AEADIISTVEFNYSGDLLATGDKGGRVVIFQREQENKSRP), 97 to 138 (EIEE…KRAE), 181 to 219 (AHTYHINSISVNSDHETYLSADDLRINLWHLEITDRSFN), and 230 to 270 (ELTE…LCDR). A Phosphoserine modification is found at S285. WD repeat units follow at residues 289-327 (EIISSISDVKFSHSGRYMMTRDYLSVKVWDLNMESRPVE), 344-385 (ENDC…DVTL), and 420-452 (DFNKKILHTAWHPVDNVIAVAATNNLYIFQDKI). Y305 carries the phosphotyrosine modification. Phosphothreonine is present on T308.

It belongs to the phosphatase 2A regulatory subunit B family. As to quaternary structure, PP2A consists of a common heterodimeric core enzyme, composed of a 36 kDa catalytic subunit (subunit C) and a 65 kDa constant regulatory subunit (PR65 or subunit A), that associates with a variety of regulatory subunits. Proteins that associate with the core dimer include three families of regulatory subunits B (the R2/B/PR55/B55, R3/B''/PR72/PR130/PR59 and R5/B'/B56 families), the 48 kDa variable regulatory subunit, viral proteins, and cell signaling molecules. Interacts with ENSA (when phosphorylated at 'Ser-67') and ARPP19 (when phosphorylated at 'Ser-62'), leading to inhibit PP2A activity. Interacts with IER5.

The protein resides in the cytoplasm. Its function is as follows. Substrate-recognition subunit of protein phosphatase 2A (PP2A) that plays a key role in cell cycle by controlling mitosis entry and exit. Involved in chromosome clustering during late mitosis by mediating dephosphorylation of MKI67. The activity of PP2A complexes containing PPP2R2D (PR55-delta) fluctuate during the cell cycle: the activity is high in interphase and low in mitosis. This Homo sapiens (Human) protein is Serine/threonine-protein phosphatase 2A 55 kDa regulatory subunit B delta isoform (PPP2R2D).